A 378-amino-acid chain; its full sequence is Dof zinc finger protein 1 (378 aa).

Low complexity predominate over residues 28 to 38 (GANPNPAATAP). A disordered region spans residues 28 to 79 (GANPNPAATAPSSVTGGALRGGGGGGAPPVAGGAGAGSTERRARPQKEKALN). Positions 45-63 (ALRGGGGGGAPPVAGGAGA) are enriched in gly residues. Basic and acidic residues predominate over residues 66–77 (TERRARPQKEKA). The segment at 78 to 132 (LNCPRCNSTNTKFCYYNNYSLQQPRYFCKTCRRYWTEGGSLRNVPVGGGSRKNKR) adopts a Dof-type zinc-finger fold. The Zn(2+) site is built by C80, C83, C105, and C108. Disordered stretches follow at residues 116 to 148 (GSLR…ASTA), 203 to 222 (SLES…NGRG), and 316 to 378 (LKPT…GTSW). The span at 133-148 (SSSSAASASPASASTA) shows a compositional bias: low complexity. Gly residues-rich tracts occupy residues 323–338 (GTGG…GVDG), 350–361 (AGGGGGGPGGHD), and 369–378 (MIGGGSGTSW).

The protein resides in the nucleus. In terms of biological role, transcription factor that may transactivate seed storage protein genes in developing seeds. This is Dof zinc finger protein 1 from Oryza sativa subsp. japonica (Rice).